Reading from the N-terminus, the 173-residue chain is Photosystem I assembly protein Ycf3 (173 aa).

3 TPR repeats span residues 35–68, 72–105, and 120–153; these read AYIYYREGFAAQNNGDYSEALENYEESLKLEENP, GETLKNMAIIYMSNGDEDRALETYVKALDQNPKQ, and GRSAQQRGLQDESDIWFDKAADVWTKAVRLYPGG.

Belongs to the Ycf3 family.

Its subcellular location is the cellular thylakoid membrane. Essential for the assembly of the photosystem I (PSI) complex. May act as a chaperone-like factor to guide the assembly of the PSI subunits. The protein is Photosystem I assembly protein Ycf3 of Prochlorococcus marinus (strain MIT 9211).